The following is a 129-amino-acid chain: Fluoride-specific ion channel FluC (129 aa).

A run of 3 helical transmembrane segments spans residues 20 to 40 (WFLG…TLAA), 67 to 87 (LLII…TAEI), and 96 to 116 (IMTA…MMLL). Na(+) is bound by residues G75 and T78.

It belongs to the fluoride channel Fluc/FEX (TC 1.A.43) family.

The protein localises to the cell inner membrane. It catalyses the reaction fluoride(in) = fluoride(out). Na(+) is not transported, but it plays an essential structural role and its presence is essential for fluoride channel function. Fluoride-specific ion channel. Important for reducing fluoride concentration in the cell, thus reducing its toxicity. This is Fluoride-specific ion channel FluC from Desulfovibrio desulfuricans (strain ATCC 27774 / DSM 6949 / MB).